The primary structure comprises 450 residues: Glucose-6-phosphate isomerase (450 aa).

E290 acts as the Proton donor in catalysis. Active-site residues include H311 and K425.

The protein belongs to the GPI family.

It is found in the cytoplasm. The enzyme catalyses alpha-D-glucose 6-phosphate = beta-D-fructose 6-phosphate. Its pathway is carbohydrate biosynthesis; gluconeogenesis. It participates in carbohydrate degradation; glycolysis; D-glyceraldehyde 3-phosphate and glycerone phosphate from D-glucose: step 2/4. Its function is as follows. Catalyzes the reversible isomerization of glucose-6-phosphate to fructose-6-phosphate. This Leuconostoc mesenteroides subsp. mesenteroides (strain ATCC 8293 / DSM 20343 / BCRC 11652 / CCM 1803 / JCM 6124 / NCDO 523 / NBRC 100496 / NCIMB 8023 / NCTC 12954 / NRRL B-1118 / 37Y) protein is Glucose-6-phosphate isomerase.